Reading from the N-terminus, the 184-residue chain is ATP synthase subunit b, chloroplastic (184 aa).

A helical membrane pass occupies residues 27–49 (LATNLINLSVVLGVLIFFGKGVL).

This sequence belongs to the ATPase B chain family. F-type ATPases have 2 components, F(1) - the catalytic core - and F(0) - the membrane proton channel. F(1) has five subunits: alpha(3), beta(3), gamma(1), delta(1), epsilon(1). F(0) has four main subunits: a(1), b(1), b'(1) and c(10-14). The alpha and beta chains form an alternating ring which encloses part of the gamma chain. F(1) is attached to F(0) by a central stalk formed by the gamma and epsilon chains, while a peripheral stalk is formed by the delta, b and b' chains.

Its subcellular location is the plastid. It is found in the chloroplast thylakoid membrane. Functionally, f(1)F(0) ATP synthase produces ATP from ADP in the presence of a proton or sodium gradient. F-type ATPases consist of two structural domains, F(1) containing the extramembraneous catalytic core and F(0) containing the membrane proton channel, linked together by a central stalk and a peripheral stalk. During catalysis, ATP synthesis in the catalytic domain of F(1) is coupled via a rotary mechanism of the central stalk subunits to proton translocation. Component of the F(0) channel, it forms part of the peripheral stalk, linking F(1) to F(0). The protein is ATP synthase subunit b, chloroplastic of Nicotiana tabacum (Common tobacco).